The chain runs to 877 residues: Leucine--tRNA ligase (877 aa).

A 'HIGH' region motif is present at residues 43 to 53 (PYPSGRIHMGH). The 'KMSKS' region motif lies at 628–632 (KMSKS). Position 631 (lysine 631) interacts with ATP.

The protein belongs to the class-I aminoacyl-tRNA synthetase family.

It localises to the cytoplasm. It carries out the reaction tRNA(Leu) + L-leucine + ATP = L-leucyl-tRNA(Leu) + AMP + diphosphate. In Brucella abortus biovar 1 (strain 9-941), this protein is Leucine--tRNA ligase.